The chain runs to 107 residues: Potassium voltage-gated channel subfamily E member 3 (107 aa).

Asparagine 5, asparagine 22, and asparagine 45 each carry an N-linked (GlcNAc...) asparagine glycan. The segment at 31–54 (CRPGPGPGSGTGPDNQTEDHRASL) is disordered. Residues 61-81 (SYMYILFVMFLFAVTVGSLIL) traverse the membrane as a helical segment. The tract at residues 72–83 (FAVTVGSLILGY) is interaction with KCNQ1. Over 82–103 (GYTRSRKVDKRSDPYHVYIKNR) the chain is Cytoplasmic.

The protein belongs to the potassium channel KCNE family. As to quaternary structure, interacts with KCNB1. Interacts with KCNC2. Associates with KCNC4/Kv3.4. Interacts with KCNQ1; associates with a KCNQ1:KCNE3 stoichiometry of 4:4; produces a current with nearly instantaneous activation with a linear current-voltage relationship and alters membrane raft localization; affects KCNQ1 structure and gating properties.

Its subcellular location is the cell membrane. It is found in the cytoplasm. The protein resides in the perikaryon. It localises to the cell projection. The protein localises to the dendrite. Its subcellular location is the membrane raft. In terms of biological role, ancillary protein that functions as a regulatory subunit of the voltage-gated potassium (Kv) channel complex composed of pore-forming and potassium-conducting alpha subunits and of regulatory beta subunits. KCNE3 beta subunit modulates the gating kinetics and enhances stability of the channel complex. Alters the gating of the delayed rectifier Kv channel containing KCNB1 alpha subunit. Associates with KCNC4/Kv3.4 alpha subunit to form the subthreshold Kv channel in skeletal muscle and to establish the resting membrane potential (RMP) in muscle cells. Association with KCNQ1/KCLQT1 alpha subunit may form the intestinal cAMP-stimulated potassium channel involved in chloride secretion that produces a current with nearly instantaneous activation with a linear current-voltage relationship. The polypeptide is Potassium voltage-gated channel subfamily E member 3 (Rattus norvegicus (Rat)).